The sequence spans 246 residues: Small ribosomal subunit protein uS2 (246 aa).

A disordered region spans residues 226–246 (QGEEEAEVAEETAPETETTTA). The segment covering 229 to 239 (EEAEVAEETAP) has biased composition (acidic residues).

This sequence belongs to the universal ribosomal protein uS2 family. In terms of assembly, part of the 30S ribosomal subunit. Interacts with BrxC.

This is Small ribosomal subunit protein uS2 (rpsB) from Bacillus subtilis (strain 168).